We begin with the raw amino-acid sequence, 93 residues long: Small ribosomal subunit protein uS19 (93 aa).

It belongs to the universal ribosomal protein uS19 family.

Functionally, protein S19 forms a complex with S13 that binds strongly to the 16S ribosomal RNA. The polypeptide is Small ribosomal subunit protein uS19 (Arthrobacter sp. (strain FB24)).